Reading from the N-terminus, the 442-residue chain is UDP-N-acetylglucosamine--peptide N-acetylglucosaminyltransferase stabilizing protein GtfB (442 aa).

Belongs to the GtfB family. Interacts with glycosyltransferase GtfA (Gtf1). Interacts with glycosyltransferase GtfA; probably forms a heterotetramer with 2 subunits each of GtfA and GtfB. Part of the accessory SecA2/SecY2 protein translocation apparatus.

It localises to the cell membrane. It functions in the pathway protein modification; protein glycosylation. Its function is as follows. Required for the polymorphic O-glycosylation of the serine-rich repeat protein Srr2. A stabilizing protein that is part of the accessory SecA2/SecY2 system specifically required to export serine-rich repeat proteins, probably Srr2 in this organism. The GtfA-GtfB (Gtf1-Gtf2 in this bacteria) complex adds GlcNAc from UDP-GlcNAc to Srr2 substrate, attaching the first sugar residue. Stabilizes the glycosylation activity of GtfA in vivo. Upon expression in a gtfB deletion mutant of S.parasanguis, GtfB confers incorrect glycosylation and partial complementation of a biofilm formation defect, while GtfA/GtfB restores correct expression of serine-rich repeat protein Fap1 and completely restores a biofilm formation defect in a S.parasanguis double gtfA-gtfB deletion. In Streptococcus agalactiae, this protein is UDP-N-acetylglucosamine--peptide N-acetylglucosaminyltransferase stabilizing protein GtfB.